The chain runs to 93 residues: Large ribosomal subunit protein eL29 (93 aa).

Over residues 1–31 the composition is skewed to basic residues; that stretch reads MAKSKNHSTHHKNRKDHRNGIKKAVVHKKTS. Residues 1 to 33 form a disordered region; that stretch reads MAKSKNHSTHHKNRKDHRNGIKKAVVHKKTSSK.

The protein belongs to the eukaryotic ribosomal protein eL29 family.

In Dictyostelium discoideum (Social amoeba), this protein is Large ribosomal subunit protein eL29 (rpl29).